Consider the following 101-residue polypeptide: UPF0358 protein EF_2458 (101 aa).

It belongs to the UPF0358 family.

In Enterococcus faecalis (strain ATCC 700802 / V583), this protein is UPF0358 protein EF_2458.